The following is a 219-amino-acid chain: uncharacterized protein (219 aa).

The helical transmembrane segment at 28-50 (IVSSLIAGGYALFVSAFTSYVYT) threads the bilayer. Positions 155 to 218 (EILRESLSEI…EEIEKELEFF (64 aa)) form a coiled coil.

Its subcellular location is the membrane. This is an uncharacterized protein from Aquifex aeolicus (strain VF5).